The following is a 485-amino-acid chain: Acyltransferase cm3D (485 aa).

Histidine 169 functions as the Proton acceptor in the catalytic mechanism.

This sequence belongs to the plant acyltransferase family. In terms of assembly, monomer.

The protein operates within secondary metabolite biosynthesis. Functionally, acyltransferase; part of the gene cluster that mediates the biosynthesis of beauveriolides I and III, cyclodepsipeptides acting as inhibitors of the acyl-CoA:cholesterol acyltransferase. The HR-PKS cm3B initiates the biosynthesis of beauveriolides by iteratively catalyzing the formation of the linear polyketide chain. The ATP-dependent acetyl-CoA ligase cm3D converts the polyketide carboxylic acid to a CoA thioester which id shuttled to the first T domain in the NRPS cm3A by the acetyltransferase cm3C. Cm3A contains 13 domains and assembles the polyketide chain, L-phenylalanine, L-alanine, and D-leucine (or D-allo-isoleucine) to form beauveriolide I (or beauveriolide III). The production of both beauveriolides I and III suggests the substrate adaptability of cm3B, using different amino acids as substrates. The polypeptide is Acyltransferase cm3D (Cordyceps militaris (strain CM01) (Caterpillar fungus)).